We begin with the raw amino-acid sequence, 678 residues long: RNA helicase NPH-II (678 aa).

Positions Phe-175 to His-351 constitute a Helicase ATP-binding domain. Gly-188–Thr-195 is an ATP binding site. The DEXH box signature appears at Asp-300–His-303. Positions Pro-371–Leu-546 constitute a Helicase C-terminal domain.

This sequence belongs to the DEAD box helicase family. DEAH subfamily. As to quaternary structure, monomer.

The protein localises to the virion. The enzyme catalyses ATP + H2O = ADP + phosphate + H(+). Its function is as follows. NTP-dependent helicase that catalyzes unidirectional unwinding of 3'tailed duplex RNAs and plays an important role during transcription of early mRNAs, presumably by preventing R-loop formation behind the elongating RNA polymerase. Might also play a role in the export of newly synthesized mRNA chains out of the core into the cytoplasm. Required for replication and propagation of viral particles. This Oryctolagus cuniculus (Rabbit) protein is RNA helicase NPH-II (OPG084).